Consider the following 203-residue polypeptide: Peptidyl-prolyl cis-trans isomerase FKBP11 (203 aa).

A signal peptide spans 1-29 (MTLRPSLLPLRLLLLLLLLLRGAVCQAEA). Positions 59–146 (GDTLHIHYSG…HFDVELIALI (88 aa)) constitute a PPIase FKBP-type domain. The helical transmembrane segment at 158–178 (ILPLVGMAMVPALLGLIGYHL) threads the bilayer.

It belongs to the FKBP-type PPIase family. As to quaternary structure, interacts with IFITM5.

It is found in the membrane. It catalyses the reaction [protein]-peptidylproline (omega=180) = [protein]-peptidylproline (omega=0). In terms of biological role, PPIases accelerate the folding of proteins during protein synthesis. This is Peptidyl-prolyl cis-trans isomerase FKBP11 (FKBP11) from Bos taurus (Bovine).